The primary structure comprises 400 residues: Inositol polyphosphate 1-phosphatase (400 aa).

Asp54 serves as a coordination point for Li(+). Position 79 (Glu79) interacts with Mg(2+). Position 80 (Glu80) interacts with Li(+). Residues Asp153 and Ile155 each contribute to the Mg(2+) site. 1D-myo-inositol 1,4-bisphosphate is bound by residues Asp156, Ser157, and Thr158. Over residues 238–257 (STRSNSEAQSQGTQNPSSEG) the composition is skewed to polar residues. The disordered stretch occupies residues 238–258 (STRSNSEAQSQGTQNPSSEGS). 1D-myo-inositol 1,4-bisphosphate-binding residues include Ser268, Lys270, Gly290, Ala291, Lys294, and Thr312. Residue Asp317 coordinates Mg(2+). Ser318 bears the Phosphoserine mark.

Belongs to the inositol monophosphatase superfamily. As to quaternary structure, monomer. Mg(2+) serves as cofactor.

It catalyses the reaction 1D-myo-inositol 1,4-bisphosphate + H2O = 1D-myo-inositol 4-phosphate + phosphate. It carries out the reaction 1D-myo-inositol 1,3,4-trisphosphate + H2O = 1D-myo-inositol 3,4-bisphosphate + phosphate. Its pathway is signal transduction; phosphatidylinositol signaling pathway. With respect to regulation, inhibited by Li(+). In terms of biological role, mg(2+)-dependent phosphatase that catalyzes the hydrolysis of the 1-position phosphate from inositol 1,4-bisphosphate and inositol 1,3,4-trisphosphate and participates in inositol phosphate metabolism. In Bos taurus (Bovine), this protein is Inositol polyphosphate 1-phosphatase.